Reading from the N-terminus, the 157-residue chain is Small ribosomal subunit protein uS7 (157 aa).

The protein belongs to the universal ribosomal protein uS7 family. Part of the 30S ribosomal subunit. Contacts proteins S9 and S11.

Functionally, one of the primary rRNA binding proteins, it binds directly to 16S rRNA where it nucleates assembly of the head domain of the 30S subunit. Is located at the subunit interface close to the decoding center, probably blocks exit of the E-site tRNA. The chain is Small ribosomal subunit protein uS7 from Chlamydia pneumoniae (Chlamydophila pneumoniae).